The primary structure comprises 184 residues: Der GTPase-activating protein YihI (184 aa).

The segment at 1–107 (MNRPVKGAAD…VVAAKPTMSP (107 aa)) is disordered. Positions 21–32 (TREELEREARER) are enriched in basic and acidic residues. A compositionally biased stretch (low complexity) spans 80 to 95 (SAVAKPKPKSKPSAPV).

It belongs to the YihI family. As to quaternary structure, interacts with Der.

Its function is as follows. A GTPase-activating protein (GAP) that modifies Der/EngA GTPase function. May play a role in ribosome biogenesis. The chain is Der GTPase-activating protein YihI from Pectobacterium carotovorum subsp. carotovorum (strain PC1).